The primary structure comprises 578 residues: Proline--tRNA ligase (578 aa).

This sequence belongs to the class-II aminoacyl-tRNA synthetase family. ProS type 1 subfamily. As to quaternary structure, homodimer.

Its subcellular location is the cytoplasm. The enzyme catalyses tRNA(Pro) + L-proline + ATP = L-prolyl-tRNA(Pro) + AMP + diphosphate. In terms of biological role, catalyzes the attachment of proline to tRNA(Pro) in a two-step reaction: proline is first activated by ATP to form Pro-AMP and then transferred to the acceptor end of tRNA(Pro). As ProRS can inadvertently accommodate and process non-cognate amino acids such as alanine and cysteine, to avoid such errors it has two additional distinct editing activities against alanine. One activity is designated as 'pretransfer' editing and involves the tRNA(Pro)-independent hydrolysis of activated Ala-AMP. The other activity is designated 'posttransfer' editing and involves deacylation of mischarged Ala-tRNA(Pro). The misacylated Cys-tRNA(Pro) is not edited by ProRS. The polypeptide is Proline--tRNA ligase (Burkholderia pseudomallei (strain K96243)).